Consider the following 373-residue polypeptide: Lipoyl amidotransferase LIPT1, mitochondrial (373 aa).

The transit peptide at 1-25 directs the protein to the mitochondrion; it reads MLIPLSMKNCFRLLCQHKVPAAGFK. In terms of domain architecture, BPL/LPL catalytic spans 57–243; sequence LEGKPILFLW…EYAAHHQVDG (187 aa). (R)-lipoyl-5'-AMP is bound by residues Tyr-107, Lys-151, Lys-161, and Thr-179.

Belongs to the LplA family.

The protein localises to the mitochondrion. The catalysed reaction is (R)-lipoyl-5'-AMP + L-lysyl-[lipoyl-carrier protein] = N(6)-[(R)-lipoyl]-L-lysyl-[lipoyl-carrier protein] + AMP + 2 H(+). It carries out the reaction N(6)-[(R)-lipoyl]-L-lysyl-[glycine-cleavage complex H protein] + L-lysyl-[lipoyl-carrier protein] = L-lysyl-[glycine-cleavage complex H protein] + N(6)-[(R)-lipoyl]-L-lysyl-[lipoyl-carrier protein]. The protein operates within protein modification; protein lipoylation via exogenous pathway; protein N(6)-(lipoyl)lysine from lipoate: step 2/2. Its function is as follows. Lipoyl amidotransferase that catalyzes the transfer of lipoyl moieties from lipoyl-protein H of the glycine cleavage system (lipoyl-GCSH) to E2 subunits of the pyruvate dehydrogenase complex (PDCE2). Unable to catalyze the transfer of octanoyl from octanoyl-GCSH to PDCE2. In vitro, it is also able to catalyze the transfer of the lipoyl group from lipoyl-AMP to the specific lysine residue of lipoyl domains of lipoate-dependent enzymes but this reaction may not be physiologically relevant. This is Lipoyl amidotransferase LIPT1, mitochondrial from Mus musculus (Mouse).